We begin with the raw amino-acid sequence, 264 residues long: Thiazole synthase (264 aa).

Lysine 98 acts as the Schiff-base intermediate with DXP in catalysis. Residues glycine 159, 185 to 186, and 207 to 208 contribute to the 1-deoxy-D-xylulose 5-phosphate site; these read AG and AS. Positions 243–264 are disordered; sequence HFAEASSPPEGRAHLDPERPAF. A compositionally biased stretch (basic and acidic residues) spans 253-264; sequence GRAHLDPERPAF.

The protein belongs to the ThiG family. In terms of assembly, homotetramer. Forms heterodimers with either ThiH or ThiS.

It is found in the cytoplasm. The catalysed reaction is [ThiS sulfur-carrier protein]-C-terminal-Gly-aminoethanethioate + 2-iminoacetate + 1-deoxy-D-xylulose 5-phosphate = [ThiS sulfur-carrier protein]-C-terminal Gly-Gly + 2-[(2R,5Z)-2-carboxy-4-methylthiazol-5(2H)-ylidene]ethyl phosphate + 2 H2O + H(+). It functions in the pathway cofactor biosynthesis; thiamine diphosphate biosynthesis. Functionally, catalyzes the rearrangement of 1-deoxy-D-xylulose 5-phosphate (DXP) to produce the thiazole phosphate moiety of thiamine. Sulfur is provided by the thiocarboxylate moiety of the carrier protein ThiS. In vitro, sulfur can be provided by H(2)S. The chain is Thiazole synthase from Streptomyces avermitilis (strain ATCC 31267 / DSM 46492 / JCM 5070 / NBRC 14893 / NCIMB 12804 / NRRL 8165 / MA-4680).